A 331-amino-acid polypeptide reads, in one-letter code: Peroxidase 69 (331 aa).

The N-terminal stretch at 1–23 (MGRGYNLLFVLVTFLVLVAAVTA) is a signal peptide. Cystine bridges form between Cys46/Cys122, Cys79/Cys84, Cys128/Cys327, and Cys205/Cys237. The Proton acceptor role is filled by His77. The Ca(2+) site is built by Asp78, Val81, Gly83, Asp85, and Ser87. An N-linked (GlcNAc...) asparagine glycan is attached at Asn93. Pro168 is a binding site for substrate. His198 contributes to the heme b binding site. Ca(2+) is bound at residue Thr199. The N-linked (GlcNAc...) asparagine glycan is linked to Asn216. Ca(2+) contacts are provided by Asp248, Ser251, and Asp256.

This sequence belongs to the peroxidase family. Classical plant (class III) peroxidase subfamily. Requires heme b as cofactor. The cofactor is Ca(2+). As to expression, mainly expressed in roots and slightly in leaves.

The protein localises to the secreted. It catalyses the reaction 2 a phenolic donor + H2O2 = 2 a phenolic radical donor + 2 H2O. Functionally, removal of H(2)O(2), oxidation of toxic reductants, biosynthesis and degradation of lignin, suberization, auxin catabolism, response to environmental stresses such as wounding, pathogen attack and oxidative stress. These functions might be dependent on each isozyme/isoform in each plant tissue. The polypeptide is Peroxidase 69 (PER69) (Arabidopsis thaliana (Mouse-ear cress)).